The primary structure comprises 1498 residues: Transposon Ty3-I Gag-Pol polyprotein (1498 aa).

Residues 265–282 (RLCFYCKKEGHRLNECRA) form a CCHC-type zinc finger. D336 acts as the For protease activity; shared with dimeric partner in catalysis. Residues 470 to 490 (TDPKSAGNRGNPRNTKLSLAP) are disordered. In terms of domain architecture, Reverse transcriptase spans 646-823 (LDNKFIVPSK…EETEFLGYSI (178 aa)). Mg(2+)-binding residues include D712, D774, and D775. The 119-residue stretch at 919 to 1037 (DASKDGIGAV…VADAISRAIY (119 aa)) folds into the RNase H Ty3/gyspy-type domain. An integrase-type zinc finger-like region spans residues 1132 to 1171 (HTLFGGHFGVTVTLAKISPIYYWPKLQHSIIQYIRTCVQC). One can recognise an Integrase catalytic domain in the interval 1185–1350 (LQPLPIAEGR…SPFEIDLGYL (166 aa)). Mg(2+) contacts are provided by D1201 and D1262.

As to quaternary structure, the protease is a homodimer, whose active site consists of two apposed aspartic acid residues. Post-translationally, initially, virus-like particles (VLPs) are composed of the structural unprocessed proteins Gag and Gag-Pol, and also contain the host initiator methionine tRNA (tRNA(i)-Met) which serves as a primer for minus-strand DNA synthesis, and a dimer of genomic Ty RNA. Processing of the polyproteins occurs within the particle and proceeds by an ordered pathway, called maturation. First, the protease (PR) is released by autocatalytic cleavage of the Gag-Pol polyprotein, and this cleavage is a prerequisite for subsequent processing at the remaining sites to release the mature structural and catalytic proteins. Maturation takes place prior to the RT reaction and is required to produce transposition-competent VLPs.

It localises to the cytoplasm. Its subcellular location is the nucleus. It carries out the reaction DNA(n) + a 2'-deoxyribonucleoside 5'-triphosphate = DNA(n+1) + diphosphate. The catalysed reaction is Endonucleolytic cleavage to 5'-phosphomonoester.. In terms of biological role, capsid protein (CA) is the structural component of the virus-like particle (VLP), forming the shell that encapsulates the genomic RNA-nucleocapsid complex. Functionally, nucleocapsid protein p11 (NC) forms the nucleocore that coats the retro-elements dimeric RNA. Binds these RNAs through its zinc fingers. Promotes primer tRNA(i)-Met annealing to the multipartite primer-binding site (PBS), dimerization of Ty3 RNA and initiation of reverse transcription. Its function is as follows. The aspartyl protease (PR) mediates the proteolytic cleavages of the Gag and Gag-Pol polyproteins after assembly of the VLP. Reverse transcriptase/ribonuclease H (RT) is a multifunctional enzyme that catalyzes the conversion of the retro-elements RNA genome into dsDNA within the VLP. The enzyme displays a DNA polymerase activity that can copy either DNA or RNA templates, and a ribonuclease H (RNase H) activity that cleaves the RNA strand of RNA-DNA heteroduplexes during plus-strand synthesis and hydrolyzes RNA primers. The conversion leads to a linear dsDNA copy of the retrotransposon that includes long terminal repeats (LTRs) at both ends. In terms of biological role, integrase (IN) targets the VLP to the nucleus, where a subparticle preintegration complex (PIC) containing at least integrase and the newly synthesized dsDNA copy of the retrotransposon must transit the nuclear membrane. Once in the nucleus, integrase performs the integration of the dsDNA into the host genome. The polypeptide is Transposon Ty3-I Gag-Pol polyprotein (TY3B-I) (Saccharomyces cerevisiae (strain ATCC 204508 / S288c) (Baker's yeast)).